The chain runs to 78 residues: Apolipoprotein C-I (78 aa).

The N-terminal stretch at 1–26 is a signal peptide; sequence MRLILWLPVLVVVLLMVTEGPAPAQG.

This sequence belongs to the apolipoprotein C1 family.

It localises to the secreted. In terms of biological role, inhibitor of lipoprotein binding to the low density lipoprotein (LDL) receptor, LDL receptor-related protein, and very low density lipoprotein (VLDL) receptor. Associates with high density lipoproteins (HDL) and the triacylglycerol-rich lipoproteins in the plasma and makes up about 10% of the protein of the VLDL and 2% of that of HDL. Appears to interfere directly with fatty acid uptake and is also the major plasma inhibitor of cholesteryl ester transfer protein (CETP). Binds free fatty acids and reduces their intracellular esterification. Modulates the interaction of APOE with beta-migrating VLDL and inhibits binding of beta-VLDL to the LDL receptor-related protein. The chain is Apolipoprotein C-I (APOC1) from Panthera tigris altaica (Siberian tiger).